Consider the following 132-residue polypeptide: Ribonuclease VapC (132 aa).

The 120-residue stretch at 4 to 123 (YMLDTNIVIY…SNNLREFERV (120 aa)) folds into the PINc domain. The Mg(2+) site is built by Asp7 and Asp98.

The protein belongs to the PINc/VapC protein family. Probably forms a complex with cognate antitoxin VapB2. Mg(2+) is required as a cofactor.

Functionally, toxic component of a type II toxin-antitoxin (TA) system. Acts as an RNase. Its toxic effect is neutralized by cognate antitoxin VapB2 but not by non-cognate antitoxin VapB1. This is Ribonuclease VapC from Haemophilus influenzae (strain 86-028NP).